A 189-amino-acid chain; its full sequence is Nucleoside diphosphate kinase 6 (189 aa).

Positions 19, 68, 96, 102, 116, and 126 each coordinate ATP. Catalysis depends on histidine 129, which acts as the Pros-phosphohistidine intermediate.

It belongs to the NDK family. The cofactor is Mg(2+).

It carries out the reaction a 2'-deoxyribonucleoside 5'-diphosphate + ATP = a 2'-deoxyribonucleoside 5'-triphosphate + ADP. It catalyses the reaction a ribonucleoside 5'-diphosphate + ATP = a ribonucleoside 5'-triphosphate + ADP. In terms of biological role, major role in the synthesis of nucleoside triphosphates other than ATP. The ATP gamma phosphate is transferred to the NDP beta phosphate via a ping-pong mechanism, using a phosphorylated active-site intermediate. The polypeptide is Nucleoside diphosphate kinase 6 (Nme6) (Mus musculus (Mouse)).